Here is a 227-residue protein sequence, read N- to C-terminus: Cleavage and polyadenylation specificity factor subunit 5 (227 aa).

One can recognise a Nudix hydrolase domain in the interval 76–201 (MRRTVEGVLI…KLVAAPLFEL (126 aa)). The interaction with RNA stretch occupies residues 102-104 (TFF). A Nudix box motif is present at residues 109-130 (GELNPGEDEVEGLKRLMTEILG).

The protein belongs to the Nudix hydrolase family. CPSF5 subfamily. In terms of assembly, homodimer (via N- and C-terminus); binds RNA as homodimer. Component of the cleavage factor Im (CFIm) complex.

It localises to the nucleus. Its subcellular location is the cytoplasm. Component of the cleavage factor Im (CFIm) complex that functions as an activator of the pre-mRNA 3'-end cleavage and polyadenylation processing required for the maturation of pre-mRNA into functional mRNAs. CFIm contributes to the recruitment of multiprotein complexes on specific sequences on the pre-mRNA 3'-end, so called cleavage and polyadenylation signals (pA signals). Most pre-mRNAs contain multiple pA signals, resulting in alternative cleavage and polyadenylation (APA) producing mRNAs with variable 3'-end formation. The CFIm complex acts as a key regulator of cleavage and polyadenylation site choice during APA through its binding to 5'-UGUA-3' elements localized in the 3'-untranslated region (UTR) for a huge number of pre-mRNAs. Binds to 5'-UGUA-3' elements localized upstream of pA signals that act as enhancers of pre-mRNA 3'-end processing. The homodimer mediates simultaneous sequence-specific recognition of two 5'-UGUA-3' elements within the pre-mRNA. Plays a role in somatic cell fate transitions and pluripotency by regulating widespread changes in gene expression through an APA-dependent function. Binds to chromatin. Binds to, but does not hydrolyze mono- and di-adenosine nucleotides. The polypeptide is Cleavage and polyadenylation specificity factor subunit 5 (Xenopus laevis (African clawed frog)).